The primary structure comprises 229 residues: ATP synthase subunit a (229 aa).

A run of 6 helical transmembrane segments spans residues 25–45 (ADAV…SIAA), 82–102 (FFPL…IGLV), 104–124 (GFFP…VVFV), 142–162 (FLGP…IGHL), 181–201 (LVLI…MMLM), and 202–222 (GVLV…IYIQ).

Belongs to the ATPase A chain family. F-type ATPases have 2 components, CF(1) - the catalytic core - and CF(0) - the membrane proton channel. CF(1) has five subunits: alpha(3), beta(3), gamma(1), delta(1), epsilon(1). CF(0) has three main subunits: a(1), b(2) and c(9-12). The alpha and beta chains form an alternating ring which encloses part of the gamma chain. CF(1) is attached to CF(0) by a central stalk formed by the gamma and epsilon chains, while a peripheral stalk is formed by the delta and b chains.

The protein localises to the cell inner membrane. In terms of biological role, key component of the proton channel; it plays a direct role in the translocation of protons across the membrane. The polypeptide is ATP synthase subunit a (Citrifermentans bemidjiense (strain ATCC BAA-1014 / DSM 16622 / JCM 12645 / Bem) (Geobacter bemidjiensis)).